The chain runs to 208 residues: N-(5'-phosphoribosyl)anthranilate isomerase (208 aa).

This sequence belongs to the TrpF family.

The catalysed reaction is N-(5-phospho-beta-D-ribosyl)anthranilate = 1-(2-carboxyphenylamino)-1-deoxy-D-ribulose 5-phosphate. It participates in amino-acid biosynthesis; L-tryptophan biosynthesis; L-tryptophan from chorismate: step 3/5. This Dechloromonas aromatica (strain RCB) protein is N-(5'-phosphoribosyl)anthranilate isomerase.